Reading from the N-terminus, the 121-residue chain is Small ribosomal subunit protein bS6 (121 aa).

Belongs to the bacterial ribosomal protein bS6 family.

In terms of biological role, binds together with bS18 to 16S ribosomal RNA. In Rickettsia prowazekii (strain Madrid E), this protein is Small ribosomal subunit protein bS6 (rpsF).